Consider the following 710-residue polypeptide: Serine/threonine-protein phosphatase PP-Z2 (710 aa).

The interval 1-382 is disordered; sequence MGNSGSKQHT…ADGDNGSRTN (382 aa). A lipid anchor (N-myristoyl glycine) is attached at Gly2. Over residues 15–27 the composition is skewed to basic and acidic residues; sequence KKDDHDGDRKKTL. Positions 40-49 are enriched in low complexity; it reads SLKSSRSLRS. Residues Ser55 and Ser71 each carry the phosphoserine modification. 2 stretches are compositionally biased toward polar residues: residues 62–77 and 95–104; these read NVQAQTQPLSRRSSTL and PNNHYLTSHP. Low complexity-rich tracts occupy residues 105 to 125 and 143 to 155; these read SSSRRLSSSSRRSSMGNNNNS and NSTSMHSTSSFNS. A compositionally biased stretch (acidic residues) spans 160–172; it reads LTDDDDDRGDDGG. Phosphothreonine is present on Thr161. A phosphoserine mark is found at Ser203 and Ser224. Residues 247 to 260 show a composition bias toward low complexity; that stretch reads SNRSNSHASSRKSS. Residues 261 to 273 are compositionally biased toward polar residues; sequence FGSTGNTAYSTPL. Thr271 carries the post-translational modification Phosphothreonine. Phosphoserine is present on Ser275. Residues 291–302 are compositionally biased toward polar residues; sequence DNVNGRGTSPIP. Ser310 carries the phosphoserine modification. The Mn(2+) site is built by Asp454, His456, Asp482, and Asn514. His515 functions as the Proton donor in the catalytic mechanism. Mn(2+) is bound by residues His563 and His638.

It belongs to the PPP phosphatase family. PP-Z subfamily. The cofactor is Mn(2+).

The enzyme catalyses O-phospho-L-seryl-[protein] + H2O = L-seryl-[protein] + phosphate. The catalysed reaction is O-phospho-L-threonyl-[protein] + H2O = L-threonyl-[protein] + phosphate. Its function is as follows. Essential for the maintenance of cell size and integrity in response to osmotic stress. The chain is Serine/threonine-protein phosphatase PP-Z2 (PPZ2) from Saccharomyces cerevisiae (strain ATCC 204508 / S288c) (Baker's yeast).